The following is a 249-amino-acid chain: Proteasome subunit alpha (249 aa).

A disordered region spans residues 229–249 (EAREAEEAAEAQSSEDGGATD).

The protein belongs to the peptidase T1A family. The 20S proteasome core is composed of 14 alpha and 14 beta subunits that assemble into four stacked heptameric rings, resulting in a barrel-shaped structure. The two inner rings, each composed of seven catalytic beta subunits, are sandwiched by two outer rings, each composed of seven alpha subunits. The catalytic chamber with the active sites is on the inside of the barrel. Has a gated structure, the ends of the cylinder being occluded by the N-termini of the alpha-subunits. Is capped by the proteasome-associated ATPase, ARC.

It localises to the cytoplasm. It participates in protein degradation; proteasomal Pup-dependent pathway. The formation of the proteasomal ATPase ARC-20S proteasome complex, likely via the docking of the C-termini of ARC into the intersubunit pockets in the alpha-rings, may trigger opening of the gate for substrate entry. Interconversion between the open-gate and close-gate conformations leads to a dynamic regulation of the 20S proteasome proteolysis activity. Functionally, component of the proteasome core, a large protease complex with broad specificity involved in protein degradation. The chain is Proteasome subunit alpha from Thermobifida fusca (strain YX).